Reading from the N-terminus, the 153-residue chain is MGKISSLPTQLFKICLCDFLKIKIHIMSSSHLFYLALCLLTFTSSATAGPETLCGAELVDALQFVCGPRGFYFNKPTGYGSSIRRAPQTGIVDECCFRSCDLRRLEMYCAPLKPTKSARSIRAQRHTDMPKTQKEVHLKNTSRGSAGNKTYRM.

Residues 49–77 (GPETLCGAELVDALQFVCGPRGFYFNKPT) are b. Intrachain disulfides connect Cys-54–Cys-96, Cys-66–Cys-109, and Cys-95–Cys-100. The c stretch occupies residues 78 to 89 (GYGSSIRRAPQT). Positions 90-110 (GIVDECCFRSCDLRRLEMYCA) are a. Positions 111 to 118 (PLKPTKSA) are d. The propeptide at 119–153 (RSIRAQRHTDMPKTQKEVHLKNTSRGSAGNKTYRM) is e peptide. The disordered stretch occupies residues 119-153 (RSIRAQRHTDMPKTQKEVHLKNTSRGSAGNKTYRM). Over residues 125 to 138 (RHTDMPKTQKEVHL) the composition is skewed to basic and acidic residues. Residues 139 to 153 (KNTSRGSAGNKTYRM) are compositionally biased toward polar residues.

The protein belongs to the insulin family. Forms a ternary complex with IGFR1 and ITGAV:ITGB3. Forms a ternary complex with IGFR1 and ITGA6:ITGB4. Forms a ternary complex with IGFBP3 and ALS.

Its subcellular location is the secreted. In terms of biological role, the insulin-like growth factors, isolated from plasma, are structurally and functionally related to insulin but have a much higher growth-promoting activity. May be a physiological regulator of [1-14C]-2-deoxy-D-glucose (2DG) transport and glycogen synthesis in osteoblasts. Stimulates glucose transport in bone-derived osteoblastic (PyMS) cells and is effective at much lower concentrations than insulin, not only regarding glycogen and DNA synthesis but also with regard to enhancing glucose uptake. May play a role in synapse maturation. Ca(2+)-dependent exocytosis of IGF1 is required for sensory perception of smell in the olfactory bulb. Acts as a ligand for IGF1R. Binds to the alpha subunit of IGF1R, leading to the activation of the intrinsic tyrosine kinase activity which autophosphorylates tyrosine residues in the beta subunit thus initiating a cascade of down-stream signaling events leading to activation of the PI3K-AKT/PKB and the Ras-MAPK pathways. Binds to integrins ITGAV:ITGB3 and ITGA6:ITGB4. Its binding to integrins and subsequent ternary complex formation with integrins and IGFR1 are essential for IGF1 signaling. Induces the phosphorylation and activation of IGFR1, MAPK3/ERK1, MAPK1/ERK2 and AKT1. As part of the MAPK/ERK signaling pathway, acts as a negative regulator of apoptosis in cardiomyocytes via promotion of STUB1/CHIP-mediated ubiquitination and degradation of ICER-type isoforms of CREM. This Rattus norvegicus (Rat) protein is Insulin-like growth factor 1.